Reading from the N-terminus, the 72-residue chain is Translation initiation factor IF-1 (72 aa).

The S1-like domain maps to 1-72 (MAKTDLLEVQ…ERGRIVFRHK (72 aa)).

The protein belongs to the IF-1 family. As to quaternary structure, component of the 30S ribosomal translation pre-initiation complex which assembles on the 30S ribosome in the order IF-2 and IF-3, IF-1 and N-formylmethionyl-tRNA(fMet); mRNA recruitment can occur at any time during PIC assembly.

It localises to the cytoplasm. Functionally, one of the essential components for the initiation of protein synthesis. Stabilizes the binding of IF-2 and IF-3 on the 30S subunit to which N-formylmethionyl-tRNA(fMet) subsequently binds. Helps modulate mRNA selection, yielding the 30S pre-initiation complex (PIC). Upon addition of the 50S ribosomal subunit IF-1, IF-2 and IF-3 are released leaving the mature 70S translation initiation complex. The sequence is that of Translation initiation factor IF-1 from Spiroplasma kunkelii.